The sequence spans 365 residues: Putative glycosyltransferase C06E1.7 (365 aa).

It belongs to the glycosyltransferase 11 family.

The chain is Putative glycosyltransferase C06E1.7 from Caenorhabditis elegans.